A 189-amino-acid chain; its full sequence is Interferon alpha-6 (189 aa).

An N-terminal signal peptide occupies residues 1–20 (MALPFALLMALVVLSCKSSC). 2 cysteine pairs are disulfide-bonded: cysteine 24-cysteine 122 and cysteine 52-cysteine 162.

The protein belongs to the alpha/beta interferon family.

The protein localises to the secreted. Its function is as follows. Produced by macrophages, IFN-alpha have antiviral activities. Interferon stimulates the production of two enzymes: a protein kinase and an oligoadenylate synthetase. This chain is Interferon alpha-6 (IFNA6), found in Homo sapiens (Human).